A 372-amino-acid polypeptide reads, in one-letter code: Peptide chain release factor 2 (372 aa).

Gln-253 bears the N5-methylglutamine mark.

This sequence belongs to the prokaryotic/mitochondrial release factor family. Methylated by PrmC. Methylation increases the termination efficiency of RF2.

The protein localises to the cytoplasm. Peptide chain release factor 2 directs the termination of translation in response to the peptide chain termination codons UGA and UAA. The protein is Peptide chain release factor 2 of Nocardia farcinica (strain IFM 10152).